A 735-amino-acid polypeptide reads, in one-letter code: Glutamine-dependent NAD(+) synthetase (735 aa).

Residues 4 to 274 (LRVATCNLNQ…VEVLDALVDL (271 aa)) enclose the CN hydrolase domain. Catalysis depends on E44, which acts as the Proton acceptor; for glutaminase activity. K113 serves as the catalytic For glutaminase activity. C174 (nucleophile; for glutaminase activity) is an active-site residue. The tract at residues 324–711 (YHRPEEEIAF…STEGELRRRK (388 aa)) is ligase. 354–361 (PLSGGADS) contributes to the ATP binding site. S356 is a catalytic residue.

In the C-terminal section; belongs to the NAD synthetase family.

The catalysed reaction is deamido-NAD(+) + L-glutamine + ATP + H2O = L-glutamate + AMP + diphosphate + NAD(+) + H(+). The protein operates within cofactor biosynthesis; NAD(+) biosynthesis; NAD(+) from deamido-NAD(+) (L-Gln route): step 1/1. This is Glutamine-dependent NAD(+) synthetase from Oryza sativa subsp. indica (Rice).